Consider the following 105-residue polypeptide: Nucleoid-associated protein Ccur92_18190 (105 aa).

This sequence belongs to the YbaB/EbfC family. Homodimer.

It localises to the cytoplasm. It is found in the nucleoid. Its function is as follows. Binds to DNA and alters its conformation. May be involved in regulation of gene expression, nucleoid organization and DNA protection. This is Nucleoid-associated protein Ccur92_18190 from Campylobacter curvus (strain 525.92).